The chain runs to 95 residues: Small ribosomal subunit protein uS15 (95 aa).

It belongs to the universal ribosomal protein uS15 family. In terms of assembly, part of the 30S ribosomal subunit. Forms a bridge to the 50S subunit in the 70S ribosome, contacting the 23S rRNA.

In terms of biological role, one of the primary rRNA binding proteins, it binds directly to 16S rRNA where it helps nucleate assembly of the platform of the 30S subunit by binding and bridging several RNA helices of the 16S rRNA. Forms an intersubunit bridge (bridge B4) with the 23S rRNA of the 50S subunit in the ribosome. This Streptomyces avermitilis (strain ATCC 31267 / DSM 46492 / JCM 5070 / NBRC 14893 / NCIMB 12804 / NRRL 8165 / MA-4680) protein is Small ribosomal subunit protein uS15.